The following is a 672-amino-acid chain: COBRA-like protein 10 (672 aa).

Residues 1-35 (MRAIDVKTGMKIPWDVRYSLSLFIFLSSILFLSNG) form the signal peptide. Asn-79, Asn-135, Asn-264, Asn-328, Asn-339, Asn-368, Asn-422, Asn-442, Asn-483, Asn-562, Asn-570, and Asn-589 each carry an N-linked (GlcNAc...) asparagine glycan. The region spanning 502 to 607 (KLPCPDNCGV…PVPGKQQSVI (106 aa)) is the CBM2 domain. Ser-646 carries GPI-anchor amidated serine lipidation. A propeptide spans 647-672 (SGHRRGISVSMSFVFATIAAFALMMD) (removed in mature form). Positions 664–672 (IAAFALMMD) match the Required for processing by the PIG complex, a critical step for apical plasma membrane localization in pollen tubes motif.

This sequence belongs to the COBRA family. In terms of processing, the GPI-anchor attachment at Ser-646 requires APTG1. In terms of tissue distribution, expressed in roots, stems, leaves, flowers and siliques. Specific expression in the pollen tube.

It is found in the cell membrane. The protein resides in the cytoplasm. The protein localises to the vesicle. Its function is as follows. Involved in the deposition of apical pectin cap and cellulose microfibrils in pollen tubes. Not essential for pollen development, hydration or germination, but required for pollen tubes growth in the female transmitting tract of pistil and toward micropyles, via the perception of ovule guidance cues. This Arabidopsis thaliana (Mouse-ear cress) protein is COBRA-like protein 10.